Here is a 136-residue protein sequence, read N- to C-terminus: Holo-[acyl-carrier-protein] synthase (136 aa).

D8 and E57 together coordinate Mg(2+).

The protein belongs to the P-Pant transferase superfamily. AcpS family. Mg(2+) is required as a cofactor.

The protein localises to the cytoplasm. The catalysed reaction is apo-[ACP] + CoA = holo-[ACP] + adenosine 3',5'-bisphosphate + H(+). In terms of biological role, transfers the 4'-phosphopantetheine moiety from coenzyme A to a Ser of acyl-carrier-protein. The sequence is that of Holo-[acyl-carrier-protein] synthase from Methylorubrum populi (strain ATCC BAA-705 / NCIMB 13946 / BJ001) (Methylobacterium populi).